We begin with the raw amino-acid sequence, 476 residues long: Glycogen synthase (476 aa).

Position 15 (K15) interacts with ADP-alpha-D-glucose.

Belongs to the glycosyltransferase 1 family. Bacterial/plant glycogen synthase subfamily.

The enzyme catalyses [(1-&gt;4)-alpha-D-glucosyl](n) + ADP-alpha-D-glucose = [(1-&gt;4)-alpha-D-glucosyl](n+1) + ADP + H(+). The protein operates within glycan biosynthesis; glycogen biosynthesis. Functionally, synthesizes alpha-1,4-glucan chains using ADP-glucose. The polypeptide is Glycogen synthase (glgA) (Haemophilus influenzae (strain ATCC 51907 / DSM 11121 / KW20 / Rd)).